The sequence spans 393 residues: uncharacterized protein (393 aa).

Disordered stretches follow at residues 77-118 (DSNN…SIRP) and 259-296 (INNN…DESN). The segment covering 79 to 92 (NNNNNNNNNNNNNN) has biased composition (low complexity). The segment covering 103 to 114 (IRQSLSSPQQLV) has biased composition (polar residues). The segment covering 259–289 (INNNNNNNNNNSNNNNNNNNSNNNDNNNNIN) has biased composition (low complexity).

This is an uncharacterized protein from Dictyostelium discoideum (Social amoeba).